The sequence spans 123 residues: Large ribosomal subunit protein uL29 (123 aa).

It belongs to the universal ribosomal protein uL29 family. In terms of assembly, component of the large ribosomal subunit.

It is found in the cytoplasm. Component of the large ribosomal subunit. The ribosome is a large ribonucleoprotein complex responsible for the synthesis of proteins in the cell. The polypeptide is Large ribosomal subunit protein uL29 (rpl35) (Xenopus tropicalis (Western clawed frog)).